Here is a 178-residue protein sequence, read N- to C-terminus: Cytidylate kinase (178 aa).

Residue 7–15 (GLPGTGTTT) coordinates ATP.

Belongs to the cytidylate kinase family. Type 2 subfamily.

The protein localises to the cytoplasm. The catalysed reaction is CMP + ATP = CDP + ADP. It catalyses the reaction dCMP + ATP = dCDP + ADP. The chain is Cytidylate kinase from Methanococcus aeolicus (strain ATCC BAA-1280 / DSM 17508 / OCM 812 / Nankai-3).